The sequence spans 320 residues: ATP-dependent 6-phosphofructokinase (320 aa).

Gly-12 is an ATP binding site. Residues 22-26 (RGVVR) and 55-60 (RYSVSD) contribute to the ADP site. ATP is bound by residues 73–74 (RF) and 103–106 (GDGS). Asp-104 lines the Mg(2+) pocket. 126–128 (TID) provides a ligand contact to substrate. The active-site Proton acceptor is the Asp-128. Arg-155 provides a ligand contact to ADP. Residues Arg-163 and 170–172 (MGR) contribute to the substrate site. Residues 186 to 188 (GCE), Lys-212, and 214 to 216 (KKH) each bind ADP. Substrate-binding positions include Glu-223, Arg-244, and 250–253 (HIQR).

It belongs to the phosphofructokinase type A (PFKA) family. ATP-dependent PFK group I subfamily. Prokaryotic clade 'B1' sub-subfamily. Homotetramer. Mg(2+) is required as a cofactor.

It is found in the cytoplasm. It carries out the reaction beta-D-fructose 6-phosphate + ATP = beta-D-fructose 1,6-bisphosphate + ADP + H(+). It participates in carbohydrate degradation; glycolysis; D-glyceraldehyde 3-phosphate and glycerone phosphate from D-glucose: step 3/4. With respect to regulation, allosterically activated by ADP and other diphosphonucleosides, and allosterically inhibited by phosphoenolpyruvate. Its function is as follows. Catalyzes the phosphorylation of D-fructose 6-phosphate to fructose 1,6-bisphosphate by ATP, the first committing step of glycolysis. This is ATP-dependent 6-phosphofructokinase from Erwinia tasmaniensis (strain DSM 17950 / CFBP 7177 / CIP 109463 / NCPPB 4357 / Et1/99).